The chain runs to 298 residues: S-adenosylmethionine-dependent nucleotide dehydratase (298 aa).

Residues 8–235 form the Radical SAM core domain; it reads ANKELVVNWH…QRFGEIIYAE (228 aa). Residues Cys22, Cys26, and Cys29 each contribute to the [4Fe-4S] cluster site.

The protein belongs to the radical SAM superfamily. Viperin family. [4Fe-4S] cluster is required as a cofactor.

The catalysed reaction is CTP + AH2 + S-adenosyl-L-methionine = 3'-deoxy-3',4'-didehydro-CTP + 5'-deoxyadenosine + L-methionine + A + H2O + H(+). It carries out the reaction UTP + AH2 + S-adenosyl-L-methionine = 3'-deoxy-3',4'-didehydro-UTP + 5'-deoxyadenosine + L-methionine + A + H2O + H(+). Its function is as follows. Expression of pVip8 in E.coli (strain MG1655) confers resistance to phages lambda, P1, SECphi8 and T7. Prevents culture collapse upon infection with T7. Catalyzes the conversion of cytidine triphosphate (CTP) to 3'-deoxy-3',4'-didehydro-CTP (ddhCTP) and uridine triphosphate (UTP) to 3'-deoxy-3',4'-didehydro-UTP (ddhUTP), probably via a SAM-dependent radical mechanism. The modified nucleotides repress transcription from T7 RNA polymerase-directed genes (possibly by acting as chain terminators), strongly suggesting these nucleotides block viral polymerase transcription. The protein is S-adenosylmethionine-dependent nucleotide dehydratase of Psychrobacter lutiphocae (strain DSM 21542 / CCUG 56590 / IMMIB L-1110).